We begin with the raw amino-acid sequence, 507 residues long: 3-octaprenyl-4-hydroxybenzoate carboxy-lyase (507 aa).

Asn-177 is a binding site for Mn(2+). Prenylated FMN is bound by residues 180-182 (IYR), 194-196 (RWL), and 199-200 (RG). Position 243 (Glu-243) interacts with Mn(2+). Asp-302 acts as the Proton donor in catalysis.

This sequence belongs to the UbiD family. As to quaternary structure, homohexamer. It depends on prenylated FMN as a cofactor. Requires Mn(2+) as cofactor.

It localises to the cell membrane. The enzyme catalyses a 4-hydroxy-3-(all-trans-polyprenyl)benzoate + H(+) = a 2-(all-trans-polyprenyl)phenol + CO2. It functions in the pathway cofactor biosynthesis; ubiquinone biosynthesis. Catalyzes the decarboxylation of 3-octaprenyl-4-hydroxy benzoate to 2-octaprenylphenol, an intermediate step in ubiquinone biosynthesis. In Cupriavidus metallidurans (strain ATCC 43123 / DSM 2839 / NBRC 102507 / CH34) (Ralstonia metallidurans), this protein is 3-octaprenyl-4-hydroxybenzoate carboxy-lyase.